The following is a 263-amino-acid chain: tRNA pseudouridine synthase A (263 aa).

The active-site Nucleophile is the D51. Y109 contacts substrate.

Belongs to the tRNA pseudouridine synthase TruA family. As to quaternary structure, homodimer.

It catalyses the reaction uridine(38/39/40) in tRNA = pseudouridine(38/39/40) in tRNA. In terms of biological role, formation of pseudouridine at positions 38, 39 and 40 in the anticodon stem and loop of transfer RNAs. This Mannheimia succiniciproducens (strain KCTC 0769BP / MBEL55E) protein is tRNA pseudouridine synthase A.